The sequence spans 706 residues: Probable cyclic nucleotide-gated ion channel 3 (706 aa).

The Cytoplasmic portion of the chain corresponds to 1 to 85; the sequence is MMNPQRNKFV…NDSYLQSWNK (85 aa). The chain crosses the membrane as a helical span at residues 86-106; it reads IFLLLSVVALAFDPLFFYIPY. Topologically, residues 107-119 are extracellular; it reads VKPERFCLNLDKK. A helical transmembrane segment spans residues 120-140; the sequence is LQTIACVFRTFIDAFYVVHML. The Cytoplasmic portion of the chain corresponds to 141-174; it reads FQFHTGFITPSSSGFGRGELNEKHKDIALRYLGS. Residues 175-195 traverse the membrane as a helical segment; it reads YFLIDLLSILPIPQVVVLAIV. Residues 196 to 208 lie on the Extracellular side of the membrane; the sequence is PRMRRPASLVAKE. A helical membrane pass occupies residues 209 to 229; that stretch reads LLKWVIFCQYVPRIARIYPLF. Residues 230–247 are Cytoplasmic-facing; it reads KEVTRTSGLVTETAWAGA. A helical transmembrane segment spans residues 248–268; the sequence is ALNLFLYMLASHVFGSFWYLI. Over 269 to 371 the chain is Extracellular; it reads SIERKDRCWR…QNLKTSAFEG (103 aa). The helical transmembrane segment at 372–392 threads the bilayer; the sequence is EIIFAIVICISGLVLFALLIG. The Cytoplasmic portion of the chain corresponds to 393–706; the sequence is NMQKYLQSTT…ADPEFPMDET (314 aa). A nucleoside 3',5'-cyclic phosphate contacts are provided by residues 477–600 and Asp548; that span reads WFQA…KQLR. Residues 591–606 are calmodulin-binding; that stretch reads YRRLHSKQLRHMFRFY. In terms of domain architecture, IQ spans 611–640; the sequence is QTWAACFIQAAWKRHCRRKLSKALREEEGK.

It belongs to the cyclic nucleotide-gated cation channel (TC 1.A.1.5) family. As to quaternary structure, homotetramer or heterotetramer.

The protein localises to the cell membrane. In terms of biological role, probable cyclic nucleotide-gated ion channel. This is Probable cyclic nucleotide-gated ion channel 3 (CNGC3) from Arabidopsis thaliana (Mouse-ear cress).